The following is a 364-amino-acid chain: Anhydro-N-acetylmuramic acid kinase (364 aa).

11 to 18 serves as a coordination point for ATP; the sequence is GSSLDGID.

Belongs to the anhydro-N-acetylmuramic acid kinase family.

It carries out the reaction 1,6-anhydro-N-acetyl-beta-muramate + ATP + H2O = N-acetyl-D-muramate 6-phosphate + ADP + H(+). It functions in the pathway amino-sugar metabolism; 1,6-anhydro-N-acetylmuramate degradation. Its pathway is cell wall biogenesis; peptidoglycan recycling. Catalyzes the specific phosphorylation of 1,6-anhydro-N-acetylmuramic acid (anhMurNAc) with the simultaneous cleavage of the 1,6-anhydro ring, generating MurNAc-6-P. Is required for the utilization of anhMurNAc either imported from the medium or derived from its own cell wall murein, and thus plays a role in cell wall recycling. This Pseudomonas savastanoi pv. phaseolicola (strain 1448A / Race 6) (Pseudomonas syringae pv. phaseolicola (strain 1448A / Race 6)) protein is Anhydro-N-acetylmuramic acid kinase.